We begin with the raw amino-acid sequence, 359 residues long: Fructose-bisphosphate aldolase class 2 (359 aa).

Ser-50 serves as a coordination point for D-glyceraldehyde 3-phosphate. Catalysis depends on Asp-83, which acts as the Proton donor. The Zn(2+) site is built by His-84, Asp-105, Glu-142, and His-198. Gly-199 is a binding site for dihydroxyacetone phosphate. Residue His-232 participates in Zn(2+) binding. Residues 233-235 and 275-278 contribute to the dihydroxyacetone phosphate site; these read GSS and NIDT.

This sequence belongs to the class II fructose-bisphosphate aldolase family. Zn(2+) serves as cofactor.

The catalysed reaction is beta-D-fructose 1,6-bisphosphate = D-glyceraldehyde 3-phosphate + dihydroxyacetone phosphate. It participates in carbohydrate degradation; glycolysis; D-glyceraldehyde 3-phosphate and glycerone phosphate from D-glucose: step 4/4. In terms of biological role, catalyzes the aldol condensation of dihydroxyacetone phosphate (DHAP or glycerone-phosphate) with glyceraldehyde 3-phosphate (G3P) to form fructose 1,6-bisphosphate (FBP) in gluconeogenesis and the reverse reaction in glycolysis. The polypeptide is Fructose-bisphosphate aldolase class 2 (fbaA) (Synechocystis sp. (strain ATCC 27184 / PCC 6803 / Kazusa)).